The chain runs to 384 residues: MAKHLFTSESVSEGHPDKIADQISDAVLDAILEQDPKARVACETYVKTGMVMVGGEITTSAWVDIEELTRETVREIGYVHSDMGFDANSCAVLNTIGKQSPDINQGVDKADPKEQGAGDQGIMFGYACNETEVLMPAPITYAHRLMERQAKVRKDGTLPWLRPDAKSQVTFQYEQGKIVGIDAVVLSTQHCDSISTPDLREAVMEEIIKPVLPSEWLNKETKYFINPTGRFVIGGPMGDCGLTGRKIIVDTYGGAARHGGGAFSGKDPSKVDRSAAYAARYVAKNIVAAGMADRCEIQLSYAIGVADPTSIMVETFGTEKVSHDIIIEAVRQFFDLRPYGLQEMLNLLQPIYKKTAAYGHFGREEFPWEATDKAALLREFAGIK.

H15 contacts ATP. D17 lines the Mg(2+) pocket. Residue E43 coordinates K(+). Residues E56 and Q99 each contribute to the L-methionine site. The segment at 99–109 is flexible loop; it reads QSPDINQGVDK. Residues 164–166, 230–231, D239, 245–246, A262, and K266 contribute to the ATP site; these read DAK, RF, and RK. Position 239 (D239) interacts with L-methionine. K270 is a binding site for L-methionine.

The protein belongs to the AdoMet synthase family. In terms of assembly, homotetramer; dimer of dimers. The cofactor is Mg(2+). Requires K(+) as cofactor.

It localises to the cytoplasm. The enzyme catalyses L-methionine + ATP + H2O = S-adenosyl-L-methionine + phosphate + diphosphate. It participates in amino-acid biosynthesis; S-adenosyl-L-methionine biosynthesis; S-adenosyl-L-methionine from L-methionine: step 1/1. Catalyzes the formation of S-adenosylmethionine (AdoMet) from methionine and ATP. The overall synthetic reaction is composed of two sequential steps, AdoMet formation and the subsequent tripolyphosphate hydrolysis which occurs prior to release of AdoMet from the enzyme. This chain is S-adenosylmethionine synthase, found in Vibrio vulnificus (strain YJ016).